A 294-amino-acid chain; its full sequence is Homeobox protein Nkx-2.5 (294 aa).

2 disordered regions span residues 48-69 and 102-122; these read GSEPPALPELPEPPPAKPPAAF and EQEKRELEDPERPRQRKRRKP. The segment covering 52–69 has biased composition (pro residues); it reads PALPELPEPPPAKPPAAF. Basic and acidic residues predominate over residues 102 to 114; that stretch reads EQEKRELEDPERP. Residues 119-178 constitute a DNA-binding region (homeobox); the sequence is RRKPRVLFSQAQVYELERRFKQQKYLSAPERDHLANVLKLTSTQVKIWFQNRRYKCKRQR.

It belongs to the NK-2 homeobox family. As to quaternary structure, homodimer (via the homeobox); binds DNA as homodimer.

The protein resides in the nucleus. Transcription factor required for the development of the heart and the spleen. Implicated in commitment to and/or differentiation of the myocardial lineage. Binds to the core DNA motif of promoter. The chain is Homeobox protein Nkx-2.5 (NKX-2.5) from Gallus gallus (Chicken).